Reading from the N-terminus, the 138-residue chain is Basic phospholipase A2 homolog Tbo-K49 (138 aa).

The N-terminal stretch at 1–16 (MRTLWIMAVLLVGVEG) is a signal peptide. Disulfide bonds link Cys-42–Cys-131, Cys-44–Cys-60, Cys-59–Cys-111, Cys-65–Cys-138, Cys-66–Cys-104, and Cys-91–Cys-102. The segment at 121-133 (KKERINTKIFCKK) is important for membrane-damaging activities in eukaryotes and bacteria; heparin-binding.

As to quaternary structure, monomer. Expressed by the venom gland.

Its subcellular location is the secreted. Snake venom phospholipase A2 homolog that lacks catalytic activity. It induces local edema. Is myotoxic. A model of myotoxic mechanism has been proposed: an apo Lys49-PLA2 is activated by the entrance of a hydrophobic molecule (e.g. fatty acid) at the hydrophobic channel of the protein leading to a reorientation of a monomer. This reorientation causes a transition between 'inactive' to 'active' states, causing alignment of C-terminal and membrane-docking sites (MDoS) side-by-side and putting the membrane-disruption sites (MDiS) in the same plane, exposed to solvent and in a symmetric position for both monomers. The MDoS region stabilizes the toxin on membrane by the interaction of charged residues with phospholipid head groups. Subsequently, the MDiS region destabilizes the membrane with penetration of hydrophobic residues. This insertion causes a disorganization of the membrane, allowing an uncontrolled influx of ions (i.e. calcium and sodium), and eventually triggering irreversible intracellular alterations and cell death. The protein is Basic phospholipase A2 homolog Tbo-K49 of Craspedocephalus borneensis (Borneo pit viper).